A 149-amino-acid polypeptide reads, in one-letter code: Large ribosomal subunit protein bL9 (149 aa).

It belongs to the bacterial ribosomal protein bL9 family.

Its function is as follows. Binds to the 23S rRNA. The sequence is that of Large ribosomal subunit protein bL9 from Campylobacter curvus (strain 525.92).